Here is a 518-residue protein sequence, read N- to C-terminus: AarF domain-containing kinase 1 (518 aa).

A Protein kinase domain is found at 149-468 (SFEREPLGTA…SKCCVQSSYA (320 aa)). Residues 155 to 163 (LGTASLAQV) and K177 contribute to the ATP site. The Proton acceptor role is filled by D309.

It belongs to the protein kinase superfamily. ADCK protein kinase family.

It is found in the mitochondrion. Functionally, essential for maintaining mitochondrial cristae formation and mitochondrial function by acting via YME1L to regulate the mitochondrial structural proteins Opa1 and Mitofilin. This function is likely to be kinase-independent. Functions in tracheal development and larval molting probably by acting in sterol modification and/or intracellular lipid trafficking. The action of this enzyme is not yet clear. It is not known if it has protein kinase activity and what type of substrate it would phosphorylate (Ser, Thr or Tyr). In Drosophila melanogaster (Fruit fly), this protein is AarF domain-containing kinase 1.